Here is a 211-residue protein sequence, read N- to C-terminus: Endo-1,4-beta-xylanase 4 (211 aa).

The signal sequence occupies residues 1–16 (MKVTAAFAGLLVTAFA). In terms of domain architecture, GH11 spans 19-210 (VPEPVLVSRS…GACSASVTIS (192 aa)). N-linked (GlcNAc...) asparagine glycosylation is present at Asn101. The active-site Nucleophile is Glu106. The active-site Proton donor is the Glu197.

The protein belongs to the glycosyl hydrolase 11 (cellulase G) family.

It localises to the secreted. The catalysed reaction is Endohydrolysis of (1-&gt;4)-beta-D-xylosidic linkages in xylans.. The protein operates within glycan degradation; xylan degradation. Its function is as follows. Endo-1,4-beta-xylanase involved in the hydrolysis of xylan, a major structural heterogeneous polysaccharide found in plant biomass representing the second most abundant polysaccharide in the biosphere, after cellulose. This is Endo-1,4-beta-xylanase 4 (XYN4) from Aspergillus niger.